Here is a 218-residue protein sequence, read N- to C-terminus: Keratin-associated protein 10-8 (218 aa).

Residues 26 to 202 (CGNQVSSPSA…FCQPSCCHPA (177 aa)) are 16 X 5 AA repeats of C-C-X(3). Tandem repeats lie at residues 50–54 (CCEPT), 55–59 (CCAPS), 60–64 (CCAPA), 86–90 (CSSSS), 96–100 (CCVPV), 101–105 (CCRPV), 111–115 (CCRPV), 121–125 (CCTPV), 131–135 (CCRPV), 136–140 (CCRPV), 141–145 (CCRPV), 151–155 (CCRPM), 161–167 (PCSAPSS), 168–172 (CCRPS), 187–191 (CCVPT), and 198–202 (CCHPA).

Belongs to the KRTAP type 10 family. Interacts with hair keratins.

In the hair cortex, hair keratin intermediate filaments are embedded in an interfilamentous matrix, consisting of hair keratin-associated proteins (KRTAP), which are essential for the formation of a rigid and resistant hair shaft through their extensive disulfide bond cross-linking with abundant cysteine residues of hair keratins. The matrix proteins include the high-sulfur and high-glycine-tyrosine keratins. The sequence is that of Keratin-associated protein 10-8 from Bos taurus (Bovine).